We begin with the raw amino-acid sequence, 484 residues long: Ornithine decarboxylase (484 aa).

Lys114 carries the post-translational modification N6-(pyridoxal phosphate)lysine. Pyridoxal 5'-phosphate is bound by residues Ser245, Gly282, and 315-318 (EPGR). Substrate is bound at residue 381-382 (FD). The active-site Proton donor; shared with dimeric partner is Cys422. Asp423 lines the substrate pocket. Tyr452 is a binding site for pyridoxal 5'-phosphate.

Belongs to the Orn/Lys/Arg decarboxylase class-II family. Homodimer. Only the dimer is catalytically active, as the active sites are constructed of residues from both monomers. Pyridoxal 5'-phosphate is required as a cofactor.

It localises to the cytoplasm. The enzyme catalyses L-ornithine + H(+) = putrescine + CO2. It participates in amine and polyamine biosynthesis; putrescine biosynthesis via L-ornithine pathway; putrescine from L-ornithine: step 1/1. Its activity is regulated as follows. Inhibited by antizyme (AZ) OAZ1 in response to polyamine levels. AZ inhibits the assembly of the functional homodimer by binding to ODC monomers and targeting them for ubiquitin-independent proteolytic destruction by the 26S proteasome. Catalyzes the first and rate-limiting step of polyamine biosynthesis that converts ornithine into putrescine, which is the precursor for the polyamines, spermidine and spermine. Polyamines are essential for cell proliferation and are implicated in cellular processes, ranging from DNA replication to apoptosis. The sequence is that of Ornithine decarboxylase (spe-1) from Neurospora crassa (strain ATCC 24698 / 74-OR23-1A / CBS 708.71 / DSM 1257 / FGSC 987).